The sequence spans 586 residues: Glutamine--tRNA ligase (586 aa).

The 'HIGH' region signature appears at 58-68; that stretch reads PEPNGYLHIGH. ATP is bound by residues 59–61 and 65–71; these read EPN and HIGHAKS. L-glutamine-binding residues include Asp-91 and Tyr-240. ATP is bound by residues Thr-259 and 294–295; that span reads RL. The short motif at 301–305 is the 'KMSKS' region element; sequence VTSKR.

Belongs to the class-I aminoacyl-tRNA synthetase family. As to quaternary structure, monomer.

It is found in the cytoplasm. The catalysed reaction is tRNA(Gln) + L-glutamine + ATP = L-glutaminyl-tRNA(Gln) + AMP + diphosphate. In Bordetella avium (strain 197N), this protein is Glutamine--tRNA ligase.